We begin with the raw amino-acid sequence, 251 residues long: Core protein VP8 (251 aa).

Positions M1–G32 are cleaved as a propeptide — removed by core protease OPG083/I7.

This sequence belongs to the orthopoxvirus OPG098 family. In terms of processing, undergoes morphogenesis-associated proteolysis which cleaves the 28 kDa to a 25-kDa product. Proteolytic cleavage of major core proteins P4a (OPG136/A10L), P4b (OPG129/A3L), and VP8 (OPG098/L4R), which occurs at a late stage of core formation, is required for production of infectious mature virions (MV).

The protein localises to the virion. It localises to the host cytoplasm. Its function is as follows. Major core structural protein. This Vaccinia virus (strain Western Reserve) (VACV) protein is Core protein VP8 (OPG098).